The primary structure comprises 526 residues: Fusicoccadiene 8-ol C-16-hydroxylase (526 aa).

Residues alanine 34–leucine 56 traverse the membrane as a helical segment. N-linked (GlcNAc...) asparagine glycosylation is found at asparagine 309, asparagine 418, and asparagine 434. Position 470 (cysteine 470) interacts with heme.

Belongs to the cytochrome P450 family. Requires heme as cofactor.

Its subcellular location is the membrane. It functions in the pathway mycotoxin biosynthesis. Cytochrome P450 monooxygenase; part of the 2 gene clusters that mediate the biosynthesis of fusicoccins, diterpene glucosides that display phytohormone-like activity and function as potent activators of plasma membrane H(+)-ATPases in plants by modifying 14-3-3 proteins and cause the plant disease constriction canker. The first step in the pathway is performed by the fusicoccadiene synthase PaFS that possesses both prenyl transferase and terpene cyclase activity, converting isopentenyl diphosphate and dimethylallyl diphosphate into geranylgeranyl diphosphate (GGDP) and successively converting GGDP into fusicocca-2,10(14)-diene, a precursor for fusicoccin H. The second step is the oxidation at the C-8 position by the cytochrome P450 monooxygenase PaP450-2 to yield fusicocca-2,10(14)-diene-8-beta-ol. The cytochrome P450 monooxygenase PaP450-1 then catalyzes the hydroxylation at the C-16 position to produce fusicocca-2,10(14)-diene-8-beta,16-diol. The dioxygenase fc-dox then catalyzes the 16-oxydation of fusicocca-2,10(14)-diene-8-beta,16-diol to yield an aldehyde (8-beta-hydroxyfusicocca-1,10(14)-dien-16-al). The short-chain dehydrogenase/reductase fc-sdr catalyzes the reduction of the aldehyde to yield fusicocca-1,10(14)-diene-8-beta,16-diol. The next step is the hydroxylation at C-9 performed by the cytochrome P450 monooxygenase PaP450-3 that leads to fusicoccin H aglycon which is glycosylated to fusicoccin H by the O-glycosyltransferase PaGT. Hydroxylation at C-12 by the cytochrome P450 monooxygenase PaP450-4 leads then to the production of fusicoccin Q and is followed by methylation by the O-methyltransferase PaMT to yield fusicoccin P. Fusicoccin P is further converted to fusicoccin J via prenylation by the O-glucose prenyltransferase PaPT. Cytochrome P450 monooxygenase PaP450-5 then performs hydroxylation at C-19 to yield dideacetyl-fusicoccin A which is acetylated to 3'-O-deacetyl-fusicoccin A by the O-acetyltransferase PaAT-2. Finally, a another acetylation by the O-acetyltransferase PaAT-1 yields fusicoccin A. The chain is Fusicoccadiene 8-ol C-16-hydroxylase from Phomopsis amygdali (Fusicoccum amygdali).